The sequence spans 342 residues: MVEARGGLDPRRLFKAYYSLSPPVEEPRDIAYREFAFQLFDGDVYVRHIGFDSMEELLSYMAREAPKNAYYSVARYSLPTARSMEEKGWLGSELMFDIDVDSLEGCGEVLGDSCLSRGYKQAVRLVEALYRDFGVPSTLYFTGNRGFHVLADCGWCRRLGREERREIARYFTLEGLRLELIIPRPGRRGVRPAPPSPDDPGLRGWIARAALERGVDLSAVHEAIEDLLDDVRVAIDVKVTQDISRLARIVGSLNGKAGLLVARLGLEGFHPGDWLSPFRGEVEFRASARLEESRILGRTVSLEPGRVYSMPAHIAVLLQLKGYGAVAGGEVVVRAAAGWRPL.

Catalysis depends on residues Asp-97, Asp-99, and Asp-236.

The protein belongs to the eukaryotic-type primase small subunit family. As to quaternary structure, heterodimer of a small subunit (PriS) and a large subunit (PriL). Requires Mg(2+) as cofactor. Mn(2+) serves as cofactor.

Catalytic subunit of DNA primase, an RNA polymerase that catalyzes the synthesis of short RNA molecules used as primers for DNA polymerase during DNA replication. The small subunit contains the primase catalytic core and has DNA synthesis activity on its own. Binding to the large subunit stabilizes and modulates the activity, increasing the rate of DNA synthesis while decreasing the length of the DNA fragments, and conferring RNA synthesis capability. The DNA polymerase activity may enable DNA primase to also catalyze primer extension after primer synthesis. May also play a role in DNA repair. The chain is DNA primase small subunit PriS from Aeropyrum pernix (strain ATCC 700893 / DSM 11879 / JCM 9820 / NBRC 100138 / K1).